We begin with the raw amino-acid sequence, 284 residues long: Putative xyloglucan endotransglucosylase/hydrolase protein 13 (284 aa).

The first 24 residues, 1–24, serve as a signal peptide directing secretion; it reads MAAFTTKQSLLLLSLLLLISLSAG. One can recognise a GH16 domain in the interval 25–214; it reads SFYDNFDITW…WTNAPFSASY (190 aa). Glu100 functions as the Nucleophile in the catalytic mechanism. Glu104 acts as the Proton donor in catalysis. Glu104 is a xyloglucan binding site. N-linked (GlcNAc...) asparagine glycosylation is present at Asn108. Residues 117–119, 127–129, 193–194, and Gly198 contribute to the xyloglucan site; these read HTN, NRE, and DW. Cystine bridges form between Cys223–Cys234 and Cys267–Cys281. Arg272 is a xyloglucan binding site.

The protein belongs to the glycosyl hydrolase 16 family. XTH group 2 subfamily. In terms of processing, contains at least one intrachain disulfide bond essential for its enzymatic activity.

It is found in the secreted. The protein resides in the cell wall. It localises to the extracellular space. The protein localises to the apoplast. The catalysed reaction is breaks a beta-(1-&gt;4) bond in the backbone of a xyloglucan and transfers the xyloglucanyl segment on to O-4 of the non-reducing terminal glucose residue of an acceptor, which can be a xyloglucan or an oligosaccharide of xyloglucan.. Its function is as follows. May catalyze xyloglucan endohydrolysis (XEH) and/or endotransglycosylation (XET). Cleaves and religates xyloglucan polymers, an essential constituent of the primary cell wall, and thereby participates in cell wall construction of growing tissues. This Arabidopsis thaliana (Mouse-ear cress) protein is Putative xyloglucan endotransglucosylase/hydrolase protein 13 (XTH13).